A 1028-amino-acid polypeptide reads, in one-letter code: RNA cytidine acetyltransferase 2 (1028 aa).

Residues 286–295 (GRGKSAALGL) and R458 each bind ATP. The N-acetyltransferase domain maps to 546-729 (VLLGPVDESQ…FAPFYVSQIP (184 aa)). Acetyl-CoA contacts are provided by residues 617–619 (IAV), 624–630 (MKMGYGS), and K717. The tract at residues 982 to 1028 (SGIISVKSTKSENENGFDKSTKKRSSDKRSSSSSKSKSSKKRKSLKE) is disordered. Residues 990–1001 (TKSENENGFDKS) are compositionally biased toward basic and acidic residues. Positions 1018 to 1028 (KSSKKRKSLKE) are enriched in basic residues.

This sequence belongs to the RNA cytidine acetyltransferase family. NAT10 subfamily.

It is found in the nucleus. The protein localises to the nucleolus. It catalyses the reaction a cytidine in 18S rRNA + acetyl-CoA + ATP + H2O = an N(4)-acetylcytidine in 18S rRNA + ADP + phosphate + CoA + H(+). It carries out the reaction a cytidine in tRNA + acetyl-CoA + ATP + H2O = an N(4)-acetylcytidine in tRNA + ADP + phosphate + CoA + H(+). Functionally, RNA cytidine acetyltransferase with specificity toward both 18S rRNA and tRNAs. Catalyzes the formation of N(4)-acetylcytidine (ac4C) in 18S rRNA. Required for early nucleolar cleavages of precursor rRNA at sites A0, A1 and A2 during 18S rRNA synthesis. Catalyzes the formation of ac4C in serine and leucine tRNAs. Requires a tRNA-binding adapter protein for full tRNA acetyltransferase activity but not for 18S rRNA acetylation. This is RNA cytidine acetyltransferase 2 from Arabidopsis thaliana (Mouse-ear cress).